A 310-amino-acid polypeptide reads, in one-letter code: Aspartate carbamoyltransferase catalytic subunit (310 aa).

Carbamoyl phosphate is bound by residues Arg58 and Thr59. Position 86 (Lys86) interacts with L-aspartate. Positions 108, 137, and 140 each coordinate carbamoyl phosphate. L-aspartate-binding residues include Arg170 and Arg225. Carbamoyl phosphate contacts are provided by Gly264 and Pro265.

Belongs to the aspartate/ornithine carbamoyltransferase superfamily. ATCase family. Heterododecamer (2C3:3R2) of six catalytic PyrB chains organized as two trimers (C3), and six regulatory PyrI chains organized as three dimers (R2).

It carries out the reaction carbamoyl phosphate + L-aspartate = N-carbamoyl-L-aspartate + phosphate + H(+). It participates in pyrimidine metabolism; UMP biosynthesis via de novo pathway; (S)-dihydroorotate from bicarbonate: step 2/3. Its function is as follows. Catalyzes the condensation of carbamoyl phosphate and aspartate to form carbamoyl aspartate and inorganic phosphate, the committed step in the de novo pyrimidine nucleotide biosynthesis pathway. The polypeptide is Aspartate carbamoyltransferase catalytic subunit (Coxiella burnetii (strain CbuG_Q212) (Coxiella burnetii (strain Q212))).